The chain runs to 117 residues: Large ribosomal subunit protein bL20 (117 aa).

Belongs to the bacterial ribosomal protein bL20 family.

In terms of biological role, binds directly to 23S ribosomal RNA and is necessary for the in vitro assembly process of the 50S ribosomal subunit. It is not involved in the protein synthesizing functions of that subunit. The chain is Large ribosomal subunit protein bL20 from Vibrio campbellii (strain ATCC BAA-1116).